A 445-amino-acid chain; its full sequence is N-succinylarginine dihydrolase (445 aa).

Substrate-binding positions include 19–28 (AGLSFGNVAS), N110, and 137–138 (HR). Residue E174 is part of the active site. R214 is a substrate binding site. The active site involves H250. Substrate-binding residues include D252 and N363. C369 (nucleophile) is an active-site residue.

Belongs to the succinylarginine dihydrolase family. Homodimer.

The catalysed reaction is N(2)-succinyl-L-arginine + 2 H2O + 2 H(+) = N(2)-succinyl-L-ornithine + 2 NH4(+) + CO2. It participates in amino-acid degradation; L-arginine degradation via AST pathway; L-glutamate and succinate from L-arginine: step 2/5. Functionally, catalyzes the hydrolysis of N(2)-succinylarginine into N(2)-succinylornithine, ammonia and CO(2). The polypeptide is N-succinylarginine dihydrolase (Shewanella halifaxensis (strain HAW-EB4)).